The following is an 89-amino-acid chain: Small ribosomal subunit protein uS15 (89 aa).

This sequence belongs to the universal ribosomal protein uS15 family. Part of the 30S ribosomal subunit. Forms a bridge to the 50S subunit in the 70S ribosome, contacting the 23S rRNA.

Its function is as follows. One of the primary rRNA binding proteins, it binds directly to 16S rRNA where it helps nucleate assembly of the platform of the 30S subunit by binding and bridging several RNA helices of the 16S rRNA. In terms of biological role, forms an intersubunit bridge (bridge B4) with the 23S rRNA of the 50S subunit in the ribosome. The sequence is that of Small ribosomal subunit protein uS15 from Xanthobacter autotrophicus (strain ATCC BAA-1158 / Py2).